Reading from the N-terminus, the 886-residue chain is DNA mismatch repair protein MutS (886 aa).

641–648 (GPNMAGKS) contributes to the ATP binding site.

It belongs to the DNA mismatch repair MutS family.

Its function is as follows. This protein is involved in the repair of mismatches in DNA. It is possible that it carries out the mismatch recognition step. This protein has a weak ATPase activity. The polypeptide is DNA mismatch repair protein MutS (Rickettsia felis (strain ATCC VR-1525 / URRWXCal2) (Rickettsia azadi)).